The chain runs to 835 residues: Leucine--tRNA ligase (835 aa).

Positions 44-54 match the 'HIGH' region motif; that stretch reads PYPSGNIHMGH. The short motif at 587-591 is the 'KMSKS' region element; sequence KMSKS. Lys590 is an ATP binding site.

This sequence belongs to the class-I aminoacyl-tRNA synthetase family.

The protein resides in the cytoplasm. It catalyses the reaction tRNA(Leu) + L-leucine + ATP = L-leucyl-tRNA(Leu) + AMP + diphosphate. In Lawsonia intracellularis (strain PHE/MN1-00), this protein is Leucine--tRNA ligase.